We begin with the raw amino-acid sequence, 57 residues long: Large ribosomal subunit protein bL32 (57 aa).

It belongs to the bacterial ribosomal protein bL32 family.

The polypeptide is Large ribosomal subunit protein bL32 (Bacillus anthracis (strain A0248)).